The chain runs to 391 residues: Elongation factor Tu (391 aa).

The 192-residue stretch at lysine 10–glutamate 201 folds into the tr-type G domain. The tract at residues glycine 19–threonine 26 is G1. Residue glycine 19–threonine 26 participates in GTP binding. Threonine 26 provides a ligand contact to Mg(2+). The interval glycine 55 to serine 59 is G2. The tract at residues aspartate 76–glycine 79 is G3. GTP-binding positions include aspartate 76–histidine 80 and asparagine 131–aspartate 134. Residues asparagine 131–aspartate 134 form a G4 region. The interval serine 169 to leucine 171 is G5.

The protein belongs to the TRAFAC class translation factor GTPase superfamily. Classic translation factor GTPase family. EF-Tu/EF-1A subfamily. Monomer.

Its subcellular location is the cytoplasm. The catalysed reaction is GTP + H2O = GDP + phosphate + H(+). In terms of biological role, GTP hydrolase that promotes the GTP-dependent binding of aminoacyl-tRNA to the A-site of ribosomes during protein biosynthesis. The protein is Elongation factor Tu of Rhizobium meliloti (strain 1021) (Ensifer meliloti).